A 288-amino-acid polypeptide reads, in one-letter code: MAEKKQWHETLHDQFGQYFAVDNVLYHEKTDHQDLIIFENAAFGRVMALDGVVQTTERDEFIYHEMMTHVPLLAHGHAKHVLIIGGGDGAMLREVTRHKNVESITMVEIDAGVVSFCRQYLPNHNAGSYDDPRFKLVIDDGVNFVNQTSQTFDVIISDCTDPIGPGESLFTSAFYEGCKRCLNPGGIFVAQNGVCFLQQEEAIDSHRKLSHYFSDVGFYQAAIPTYYGGIMTFAWATDNDALRHLSTEIIQARFLASGLKCRYYNPAVHTAAFALPQYLQDALASQPS.

In terms of domain architecture, PABS spans 9–238 (ETLHDQFGQY…GIMTFAWATD (230 aa)). Glutamine 33 contacts S-methyl-5'-thioadenosine. Spermidine is bound by residues histidine 64 and aspartate 88. S-methyl-5'-thioadenosine is bound by residues glutamate 108 and 140–141 (DG). Aspartate 158 (proton acceptor) is an active-site residue. Spermidine is bound at residue 158-161 (DCTD). Residue proline 165 participates in S-methyl-5'-thioadenosine binding.

This sequence belongs to the spermidine/spermine synthase family. In terms of assembly, homodimer or homotetramer.

It is found in the cytoplasm. The catalysed reaction is S-adenosyl 3-(methylsulfanyl)propylamine + putrescine = S-methyl-5'-thioadenosine + spermidine + H(+). It participates in amine and polyamine biosynthesis; spermidine biosynthesis; spermidine from putrescine: step 1/1. In terms of biological role, catalyzes the irreversible transfer of a propylamine group from the amino donor S-adenosylmethioninamine (decarboxy-AdoMet) to putrescine (1,4-diaminobutane) to yield spermidine. The polypeptide is Polyamine aminopropyltransferase (Escherichia coli O17:K52:H18 (strain UMN026 / ExPEC)).